A 58-amino-acid polypeptide reads, in one-letter code: Parvalbumin beta 3 (58 aa).

At alanine 1 the chain carries N-acetylalanine. Residues 24-58 (FNYKTFFKFFAIIDQDHSGFIEEEELKALSDAETK) enclose the EF-hand domain. 6 residues coordinate Ca(2+): aspartate 37, aspartate 39, serine 41, phenylalanine 43, glutamate 45, and glutamate 48.

The protein belongs to the parvalbumin family.

In muscle, parvalbumin is thought to be involved in relaxation after contraction. It binds two calcium ions. This chain is Parvalbumin beta 3, found in Merluccius senegalensis (Senegalese hake).